The sequence spans 205 residues: Holliday junction branch migration complex subunit RuvA (205 aa).

The segment at 1–64 (MIGKLKGVVD…EDMIRLYGFR (64 aa)) is domain I. The interval 65 to 143 (SDAEREWFRL…AFAPVDPALV (79 aa)) is domain II. The interval 144 to 152 (ALAGAVEEG) is flexible linker. Residues 153-205 (AAPQPVADAVSALVNLGYPQVQAAAAIAAALKGAGEGAEAKVLIRLGLRELAR) form a domain III region.

It belongs to the RuvA family. In terms of assembly, homotetramer. Forms an RuvA(8)-RuvB(12)-Holliday junction (HJ) complex. HJ DNA is sandwiched between 2 RuvA tetramers; dsDNA enters through RuvA and exits via RuvB. An RuvB hexamer assembles on each DNA strand where it exits the tetramer. Each RuvB hexamer is contacted by two RuvA subunits (via domain III) on 2 adjacent RuvB subunits; this complex drives branch migration. In the full resolvosome a probable DNA-RuvA(4)-RuvB(12)-RuvC(2) complex forms which resolves the HJ.

Its subcellular location is the cytoplasm. In terms of biological role, the RuvA-RuvB-RuvC complex processes Holliday junction (HJ) DNA during genetic recombination and DNA repair, while the RuvA-RuvB complex plays an important role in the rescue of blocked DNA replication forks via replication fork reversal (RFR). RuvA specifically binds to HJ cruciform DNA, conferring on it an open structure. The RuvB hexamer acts as an ATP-dependent pump, pulling dsDNA into and through the RuvAB complex. HJ branch migration allows RuvC to scan DNA until it finds its consensus sequence, where it cleaves and resolves the cruciform DNA. The protein is Holliday junction branch migration complex subunit RuvA of Methylobacterium radiotolerans (strain ATCC 27329 / DSM 1819 / JCM 2831 / NBRC 15690 / NCIMB 10815 / 0-1).